Reading from the N-terminus, the 395-residue chain is GTPase Obg (395 aa).

An Obg domain is found at methionine 1–methionine 159. The disordered stretch occupies residues isoleucine 128–glycine 147. Positions alanine 160–threonine 333 constitute an OBG-type G domain. Residues glycine 166–serine 173, phenylalanine 191–valine 195, aspartate 213–glycine 216, asparagine 283–aspartate 286, and serine 314–isoleucine 316 each bind GTP. Mg(2+) contacts are provided by serine 173 and threonine 193. The segment covering alanine 340 to methionine 368 has biased composition (basic and acidic residues). The interval alanine 340–proline 395 is disordered. The segment covering glutamate 376–proline 395 has biased composition (acidic residues).

It belongs to the TRAFAC class OBG-HflX-like GTPase superfamily. OBG GTPase family. Monomer. It depends on Mg(2+) as a cofactor.

It is found in the cytoplasm. In terms of biological role, an essential GTPase which binds GTP, GDP and possibly (p)ppGpp with moderate affinity, with high nucleotide exchange rates and a fairly low GTP hydrolysis rate. Plays a role in control of the cell cycle, stress response, ribosome biogenesis and in those bacteria that undergo differentiation, in morphogenesis control. The chain is GTPase Obg from Chromohalobacter salexigens (strain ATCC BAA-138 / DSM 3043 / CIP 106854 / NCIMB 13768 / 1H11).